An 801-amino-acid polypeptide reads, in one-letter code: Phenylalanine--tRNA ligase beta subunit (801 aa).

A tRNA-binding domain is found at G39 to F147. The region spanning L401 to V477 is the B5 domain. Mg(2+) is bound by residues D455, D461, E464, and E465. One can recognise an FDX-ACB domain in the interval S708–R801.

It belongs to the phenylalanyl-tRNA synthetase beta subunit family. Type 1 subfamily. In terms of assembly, tetramer of two alpha and two beta subunits. It depends on Mg(2+) as a cofactor.

The protein localises to the cytoplasm. It carries out the reaction tRNA(Phe) + L-phenylalanine + ATP = L-phenylalanyl-tRNA(Phe) + AMP + diphosphate + H(+). The polypeptide is Phenylalanine--tRNA ligase beta subunit (Geobacter metallireducens (strain ATCC 53774 / DSM 7210 / GS-15)).